The sequence spans 126 residues: Chorion class B protein M1768 (126 aa).

Residues 1–17 (YGGLGYGGLGGGCGRGF) form a left arm region. Residues 18–86 (SGGGLPVATA…GNGAVGITRE (69 aa)) are central domain. The segment at 87 to 126 (GGFGYGAGYGDGYGLGFGGYGGGYGLGYGGYGGCGCSWGY) is right arm (Gly-rich tandem repeats).

This sequence belongs to the chorion protein family.

This protein is one of many from the eggshell of the silk moth. This Bombyx mori (Silk moth) protein is Chorion class B protein M1768.